The sequence spans 891 residues: Valine--tRNA ligase (891 aa).

The 'HIGH' region motif lies at 43-53 (PFTSGTLHLGH). The 'KMSKS' region motif lies at 536-540 (KMSKS). K539 provides a ligand contact to ATP.

Belongs to the class-I aminoacyl-tRNA synthetase family. ValS type 2 subfamily.

It is found in the cytoplasm. It carries out the reaction tRNA(Val) + L-valine + ATP = L-valyl-tRNA(Val) + AMP + diphosphate. In terms of biological role, catalyzes the attachment of valine to tRNA(Val). As ValRS can inadvertently accommodate and process structurally similar amino acids such as threonine, to avoid such errors, it has a 'posttransfer' editing activity that hydrolyzes mischarged Thr-tRNA(Val) in a tRNA-dependent manner. In Pyrococcus abyssi (strain GE5 / Orsay), this protein is Valine--tRNA ligase.